The chain runs to 499 residues: FAD-dependent oxidoreductase domain-containing protein 1 (499 aa).

A helical membrane pass occupies residues Glu75–Leu95.

Requires FAD as cofactor.

The protein localises to the mitochondrion inner membrane. Required for the assembly of the mitochondrial membrane respiratory chain NADH dehydrogenase (Complex I). Involved in mid-late stages of complex I assembly. The polypeptide is FAD-dependent oxidoreductase domain-containing protein 1 (foxred1) (Xenopus laevis (African clawed frog)).